A 454-amino-acid polypeptide reads, in one-letter code: tRNA modification GTPase MnmE (454 aa).

3 residues coordinate (6S)-5-formyl-5,6,7,8-tetrahydrofolate: Arg-23, Glu-80, and Lys-120. The TrmE-type G domain occupies 216–377 (GMKVVIAGRP…LRDHLKQSMG (162 aa)). Asn-226 serves as a coordination point for K(+). GTP contacts are provided by residues 226–231 (NAGKSS), 245–251 (TDIAGTT), 270–273 (DTAG), 335–338 (NKAD), and 358–360 (SAR). Position 230 (Ser-230) interacts with Mg(2+). K(+) contacts are provided by Thr-245, Ile-247, and Thr-250. Residue Thr-251 coordinates Mg(2+). Lys-454 provides a ligand contact to (6S)-5-formyl-5,6,7,8-tetrahydrofolate.

Belongs to the TRAFAC class TrmE-Era-EngA-EngB-Septin-like GTPase superfamily. TrmE GTPase family. Homodimer. Heterotetramer of two MnmE and two MnmG subunits. K(+) is required as a cofactor.

It is found in the cytoplasm. Its function is as follows. Exhibits a very high intrinsic GTPase hydrolysis rate. Involved in the addition of a carboxymethylaminomethyl (cmnm) group at the wobble position (U34) of certain tRNAs, forming tRNA-cmnm(5)s(2)U34. This chain is tRNA modification GTPase MnmE, found in Yersinia pseudotuberculosis serotype O:3 (strain YPIII).